Consider the following 747-residue polypeptide: Oxysterol-binding protein-related protein 11 (747 aa).

The residue at position 1 (Met-1) is an N-acetylmethionine. The segment at 1 to 50 is disordered; sequence MQGGEPVSTMKVSESEGKLEGQATAVTPNKNSSCGGGISSSSSSRGGSAK. Residue Ser-15 is modified to Phosphoserine. Thr-27 carries the post-translational modification Phosphothreonine. The region spanning 58–155 is the PH domain; that stretch reads MENVYGYLMK…WVSRLQICTQ (98 aa). Tyr-62 is modified (phosphotyrosine). The segment at 158-188 is disordered; it reads TEAIGKNNPPLKSRSFSLASSSNSPISQRRP. Residues 170–184 show a composition bias toward low complexity; that stretch reads SRSFSLASSSNSPIS. Phosphoserine occurs at positions 172, 174, 177, 181, 184, and 189. Basic and acidic residues predominate over residues 689 to 713; sequence EIDKATEHKHTLEERQRTEERHRTE. Positions 689 to 714 are disordered; the sequence is EIDKATEHKHTLEERQRTEERHRTET.

This sequence belongs to the OSBP family. Heterodimer with OSBPL9. In terms of tissue distribution, present at highest levels in ovary, testis, kidney, liver, stomach, brain, and adipose tissue. Strong expression (at protein level) in epithelial cells of kidney tubules, testicular tubules, caecum, and skin. Present at low levels in subcutaneous and visceral adipose tissue (at protein level).

The protein resides in the late endosome membrane. It localises to the golgi apparatus. Its subcellular location is the trans-Golgi network membrane. It catalyses the reaction a 1,2-diacyl-sn-glycero-3-phospho-(1D-myo-inositol 4-phosphate)(out) + a 1,2-diacyl-sn-glycero-3-phospho-L-serine(in) = a 1,2-diacyl-sn-glycero-3-phospho-(1D-myo-inositol 4-phosphate)(in) + a 1,2-diacyl-sn-glycero-3-phospho-L-serine(out). Its function is as follows. Plays a role in regulating ADIPOQ and FABP4 levels in differentiating adipocytes and is also involved in regulation of adipocyte triglyceride storage. Weakly binds 25-hydroxycholesterol. Interacts with OSBPL9 to function as lipid transfer proteins. Together they form a heterodimer that localizes at the ER-trans-Golgi membrane contact sites, and exchanges phosphatidylserine (1,2-diacyl-sn-glycero-3-phospho-L-serine, PS) for phosphatidylinositol-4-phosphate (1,2-diacyl-sn-glycero-3-phospho-(1D-myo-inositol 4-phosphate), PI(4)P) between the two organelles, a step that is critical for sphingomyelin synthesis in the Golgi complex. The polypeptide is Oxysterol-binding protein-related protein 11 (OSBPL11) (Homo sapiens (Human)).